Reading from the N-terminus, the 415-residue chain is tRNA(Ile)-lysidine synthase (415 aa).

36 to 41 lines the ATP pocket; that stretch reads SGGRDS.

It belongs to the tRNA(Ile)-lysidine synthase family.

The protein resides in the cytoplasm. It catalyses the reaction cytidine(34) in tRNA(Ile2) + L-lysine + ATP = lysidine(34) in tRNA(Ile2) + AMP + diphosphate + H(+). Ligates lysine onto the cytidine present at position 34 of the AUA codon-specific tRNA(Ile) that contains the anticodon CAU, in an ATP-dependent manner. Cytidine is converted to lysidine, thus changing the amino acid specificity of the tRNA from methionine to isoleucine. In Tropheryma whipplei (strain Twist) (Whipple's bacillus), this protein is tRNA(Ile)-lysidine synthase.